The primary structure comprises 451 residues: Penicillin-binding protein 4* (451 aa).

Residue serine 61 is the Acyl-ester intermediate of the active site.

It belongs to the beta-lactamase family.

The protein localises to the forespore outer membrane. It functions in the pathway cell wall biogenesis; peptidoglycan biosynthesis. In terms of biological role, probably involved in peptidoglycan modification during cortex synthesis. In Bacillus subtilis (strain 168), this protein is Penicillin-binding protein 4* (pbpE).